Reading from the N-terminus, the 387-residue chain is MEGTQEALSGKMRLLFTPAARTSLLMLRLNEAALRALQECQQQQVRPVIAFQGQRGYLRLPGPGWSCLFSFIVSQCGQEGGGLDLVYQRLGRSGPNCLHCLGSLRERLTIWAAMDTIPAPLLAQEHLTEGTRESESWQDSEDEPEGHPQMALQEVSDPLASNHEQSLPGSSSEPMAQWEVRNHTYLSNREPDQPLPSSASQKRLDKKRSAPITTEEPEEKRPRALPLASSPLQGLSNQDSPEEQDWGQDADGDSRLEQSLSVQSASESPSPEEVPDYLLQYSTIHSAEQQQAYEQDFETDYAEYRILHARVGAASQRFTELGAEIKRLQRGTPEHKVLEDKIVQEYKKFRKRYPSYSEEKRRCEYLHEKLSHIKGLILEFEEKNRGS.

Disordered regions lie at residues 127–148 (LTEG…EGHP) and 186–275 (LSNR…EEVP). Polar residues predominate over residues 230-239 (SPLQGLSNQD). A Phosphoserine modification is found at Ser-240. Over residues 240–251 (SPEEQDWGQDAD) the composition is skewed to acidic residues. The segment covering 257–271 (EQSLSVQSASESPSP) has biased composition (low complexity). In terms of domain architecture, OCEL spans 275 to 385 (PDYLLQYSTI…LILEFEEKNR (111 aa)).

Belongs to the ELL/occludin family. As to quaternary structure, interacts with AFF4. Component of the super elongation complex (SEC), at least composed of EAF1, EAF2, CDK9, MLLT3/AF9, AFF (AFF1 or AFF4), the P-TEFb complex and ELL (ELL, ELL2 or ELL3). Component of the little elongation complex (LEC), at least composed of ELL (ELL, ELL2 or ELL3), ZC3H8, ICE1 and ICE2.

It is found in the nucleus. In terms of biological role, enhancer-binding elongation factor that specifically binds enhancers in embryonic stem cells (ES cells), marks them, and is required for their future activation during stem cell specification. Elongation factor component of the super elongation complex (SEC), a complex required to increase the catalytic rate of RNA polymerase II transcription by suppressing transient pausing by the polymerase at multiple sites along the DNA. Component of the little elongation complex (LEC), a complex required to regulate small nuclear RNA (snRNA) gene transcription by RNA polymerase II and III. Does not only bind to enhancer regions of active genes, but also marks the enhancers that are in a poised or inactive state in ES cells and is required for establishing proper RNA polymerase II occupancy at developmentally regulated genes in a cohesin-dependent manner. Probably required for priming developmentally regulated genes for later recruitment of the super elongation complex (SEC), for transcriptional activation during differentiation. Required for recruitment of P-TEFb within SEC during differentiation. Probably preloaded on germ cell chromatin, suggesting that it may prime gene activation by marking enhancers as early as in the germ cells. Promoting epithelial-mesenchymal transition (EMT). This Rattus norvegicus (Rat) protein is RNA polymerase II elongation factor ELL3 (Ell3).